Here is a 355-residue protein sequence, read N- to C-terminus: Probable L-aspartate decarboxylase (355 aa).

Lys210 is subject to N6-(pyridoxal phosphate)lysine.

Belongs to the group II decarboxylase family. MfnA subfamily. Pyridoxal 5'-phosphate serves as cofactor.

It catalyses the reaction L-aspartate + H(+) = beta-alanine + CO2. It participates in cofactor biosynthesis; coenzyme A biosynthesis. Functionally, catalyzes the decarboxylation of L-aspartate to produce beta-alanine. The polypeptide is Probable L-aspartate decarboxylase (Halobacterium salinarum (strain ATCC 29341 / DSM 671 / R1)).